Here is a 314-residue protein sequence, read N- to C-terminus: Lipoyl synthase (314 aa).

Cys55, Cys60, Cys66, Cys81, Cys85, Cys88, and Ser292 together coordinate [4Fe-4S] cluster. A Radical SAM core domain is found at Trp67 to Ser281.

This sequence belongs to the radical SAM superfamily. Lipoyl synthase family. [4Fe-4S] cluster is required as a cofactor.

Its subcellular location is the cytoplasm. It catalyses the reaction [[Fe-S] cluster scaffold protein carrying a second [4Fe-4S](2+) cluster] + N(6)-octanoyl-L-lysyl-[protein] + 2 oxidized [2Fe-2S]-[ferredoxin] + 2 S-adenosyl-L-methionine + 4 H(+) = [[Fe-S] cluster scaffold protein] + N(6)-[(R)-dihydrolipoyl]-L-lysyl-[protein] + 4 Fe(3+) + 2 hydrogen sulfide + 2 5'-deoxyadenosine + 2 L-methionine + 2 reduced [2Fe-2S]-[ferredoxin]. Its pathway is protein modification; protein lipoylation via endogenous pathway; protein N(6)-(lipoyl)lysine from octanoyl-[acyl-carrier-protein]: step 2/2. Functionally, catalyzes the radical-mediated insertion of two sulfur atoms into the C-6 and C-8 positions of the octanoyl moiety bound to the lipoyl domains of lipoate-dependent enzymes, thereby converting the octanoylated domains into lipoylated derivatives. This chain is Lipoyl synthase, found in Mycobacterium leprae (strain Br4923).